Here is a 100-residue protein sequence, read N- to C-terminus: NADH-quinone oxidoreductase subunit K 2 (100 aa).

3 helical membrane-spanning segments follow: residues 4–24 (LWWYIVLGVVLFVIGAAGVLI), 28–48 (ILVVLMSLELLLNSVNINFIA), and 60–80 (IFAIFVIAITAAEVAVALGIL).

This sequence belongs to the complex I subunit 4L family. NDH-1 is composed of 14 different subunits. Subunits NuoA, H, J, K, L, M, N constitute the membrane sector of the complex.

The protein localises to the cell inner membrane. The catalysed reaction is a quinone + NADH + 5 H(+)(in) = a quinol + NAD(+) + 4 H(+)(out). In terms of biological role, NDH-1 shuttles electrons from NADH, via FMN and iron-sulfur (Fe-S) centers, to quinones in the respiratory chain. The immediate electron acceptor for the enzyme in this species is believed to be ubiquinone. Couples the redox reaction to proton translocation (for every two electrons transferred, four hydrogen ions are translocated across the cytoplasmic membrane), and thus conserves the redox energy in a proton gradient. The sequence is that of NADH-quinone oxidoreductase subunit K 2 from Rhizobium etli (strain ATCC 51251 / DSM 11541 / JCM 21823 / NBRC 15573 / CFN 42).